The chain runs to 970 residues: Pentatricopeptide repeat-containing protein At1g18485 (970 aa).

PPR repeat units lie at residues 119 to 149, 150 to 185, 186 to 220, 221 to 251, 252 to 282, 291 to 325, 326 to 356, 357 to 391, 394 to 428, 429 to 459, 460 to 494, 495 to 529, 530 to 560, 561 to 595, 597 to 630, 631 to 661, 662 to 696, 697 to 727, and 733 to 764; these read DDVL…LRSK, NLFQ…DLLP, DHFT…GLVE, DVFV…MPER, NLVS…MMEE, DVAT…RLDK, ELVL…NNNK, NVVS…GEDV, DEVT…EFVY, NELV…IRSK, TVNS…GLLP, DSFT…WLER, DLFV…MEDK, SLVS…GIQL, GISM…LLED, DAFI…LKEK, STAS…GHNP, DDLT…MKSS, and NLKH…MSEE. The tract at residues 770 to 845 is type E motif; that stretch reads WKSLLSSCRI…AGCSWIELNR (76 aa). A type E(+) motif region spans residues 846-875; sequence KVFSFVVGERFLDGFEEIKSLWSILEMKIS. The tract at residues 876-970 is type DYW motif; sequence KMGYRPDTMS…NGVCSCGDYW (95 aa).

It belongs to the PPR family. PCMP-H subfamily.

This chain is Pentatricopeptide repeat-containing protein At1g18485 (PCMP-H8), found in Arabidopsis thaliana (Mouse-ear cress).